Here is a 367-residue protein sequence, read N- to C-terminus: Peptide chain release factor 2 (367 aa).

At glutamine 254 the chain carries N5-methylglutamine.

This sequence belongs to the prokaryotic/mitochondrial release factor family. In terms of processing, methylated by PrmC. Methylation increases the termination efficiency of RF2.

The protein resides in the cytoplasm. Peptide chain release factor 2 directs the termination of translation in response to the peptide chain termination codons UGA and UAA. In Leptospira borgpetersenii serovar Hardjo-bovis (strain JB197), this protein is Peptide chain release factor 2.